The primary structure comprises 432 residues: Adenylosuccinate synthetase (432 aa).

Residues 13–19 and 41–43 each bind GTP; these read GDEGKGK and GHT. The Proton acceptor role is filled by aspartate 14. 2 residues coordinate Mg(2+): aspartate 14 and glycine 41. Residues 14–17, 39–42, threonine 130, arginine 144, glutamine 225, threonine 240, and arginine 306 each bind IMP; these read DEGK and NAGH. The active-site Proton donor is histidine 42. Substrate is bound at residue 302 to 308; that stretch reads TVTGRAR. Residues arginine 308, 334 to 336, and 416 to 418 each bind GTP; these read KLD and STG.

It belongs to the adenylosuccinate synthetase family. As to quaternary structure, homodimer. It depends on Mg(2+) as a cofactor.

Its subcellular location is the cytoplasm. The catalysed reaction is IMP + L-aspartate + GTP = N(6)-(1,2-dicarboxyethyl)-AMP + GDP + phosphate + 2 H(+). The protein operates within purine metabolism; AMP biosynthesis via de novo pathway; AMP from IMP: step 1/2. Plays an important role in the de novo pathway of purine nucleotide biosynthesis. Catalyzes the first committed step in the biosynthesis of AMP from IMP. This Herminiimonas arsenicoxydans protein is Adenylosuccinate synthetase.